The sequence spans 421 residues: Gamma-glutamyl phosphate reductase (421 aa).

Belongs to the gamma-glutamyl phosphate reductase family.

The protein resides in the cytoplasm. It catalyses the reaction L-glutamate 5-semialdehyde + phosphate + NADP(+) = L-glutamyl 5-phosphate + NADPH + H(+). It functions in the pathway amino-acid biosynthesis; L-proline biosynthesis; L-glutamate 5-semialdehyde from L-glutamate: step 2/2. In terms of biological role, catalyzes the NADPH-dependent reduction of L-glutamate 5-phosphate into L-glutamate 5-semialdehyde and phosphate. The product spontaneously undergoes cyclization to form 1-pyrroline-5-carboxylate. The chain is Gamma-glutamyl phosphate reductase from Brucella abortus (strain 2308).